The following is a 236-amino-acid chain: Rab-like protein 3 (236 aa).

The tract at residues 1-236 (MASLDRVKVL…AGTLKSLHYD (236 aa)) is small GTPase-like. Residues 16–21 (GVGKSS), 148–150 (KLD), and 179–180 (DC) contribute to the GTP site.

Belongs to the small GTPase superfamily. Rab family. As to quaternary structure, homodimer. Interacts with GPR89; the interaction stabilizes GPR89. Interacts with RAP1GDS1.

Required for KRAS signaling regulation and modulation of cell proliferation. Regulator of KRAS prenylation, and probably prenylation of other small GTPases. Required for lymphocyte development and function. Not required for myeloid cell development. The chain is Rab-like protein 3 (RABL3) from Homo sapiens (Human).